The following is a 388-amino-acid chain: 8-amino-7-oxononanoate synthase (388 aa).

Residue arginine 20 participates in substrate binding. Pyridoxal 5'-phosphate is bound at residue 107–108 (GY). Residue histidine 132 coordinates substrate. Serine 178, histidine 206, and threonine 237 together coordinate pyridoxal 5'-phosphate. Residue lysine 240 is modified to N6-(pyridoxal phosphate)lysine. Substrate is bound at residue threonine 356.

This sequence belongs to the class-II pyridoxal-phosphate-dependent aminotransferase family. BioF subfamily. Homodimer. Requires pyridoxal 5'-phosphate as cofactor.

It carries out the reaction 6-carboxyhexanoyl-[ACP] + L-alanine + H(+) = (8S)-8-amino-7-oxononanoate + holo-[ACP] + CO2. It functions in the pathway cofactor biosynthesis; biotin biosynthesis. In terms of biological role, catalyzes the decarboxylative condensation of pimeloyl-[acyl-carrier protein] and L-alanine to produce 8-amino-7-oxononanoate (AON), [acyl-carrier protein], and carbon dioxide. The chain is 8-amino-7-oxononanoate synthase from Herminiimonas arsenicoxydans.